A 527-amino-acid polypeptide reads, in one-letter code: Probable protein kinase UbiB (527 aa).

Residues 23 to 43 (ELLLELPLPFWLRALSWLLPW) form a helical membrane-spanning segment. The region spanning 125 to 488 (RFDSQPLASA…ESDARDQWPL (364 aa)) is the Protein kinase domain. Residues 131–139 (LASASVAQV) and Lys153 contribute to the ATP site. The active-site Proton acceptor is Asp288. Residues 504–524 (LAPLLATWPAWLMVGGGLYLV) form a helical membrane-spanning segment.

This sequence belongs to the ABC1 family. UbiB subfamily.

The protein resides in the cell inner membrane. The protein operates within cofactor biosynthesis; ubiquinone biosynthesis [regulation]. Is probably a protein kinase regulator of UbiI activity which is involved in aerobic coenzyme Q (ubiquinone) biosynthesis. The protein is Probable protein kinase UbiB of Ectopseudomonas mendocina (strain ymp) (Pseudomonas mendocina).